Reading from the N-terminus, the 92-residue chain is UPF0223 protein SSA_0938 (92 aa).

This sequence belongs to the UPF0223 family.

This chain is UPF0223 protein SSA_0938, found in Streptococcus sanguinis (strain SK36).